We begin with the raw amino-acid sequence, 198 residues long: Suppressor of cytokine signaling 2 (198 aa).

A disordered region spans residues 1-29 (MTLRCLEPSGNGGEGTRSQWGTAGSAEEP). The segment at 1–75 (MTLRCLEPSG…PEGTFLIRDS (75 aa)) is interaction with AREL1. Ser30 carries the phosphoserine modification. Positions 48–156 (WYWGSMTVNE…TVHLYLTKPL (109 aa)) constitute an SH2 domain. At Ser52 the chain carries Phosphoserine; by PKC. The SOCS box domain occupies 151-197 (YLTKPLYTSAPSLQHLCRLTINKCTGAIWGLPLPTRLKDYLEEYKFQ). Lys173 participates in a covalent cross-link: Glycyl lysine isopeptide (Lys-Gly) (interchain with G-Cter in ubiquitin).

In terms of assembly, substrate-recognition component of the ECS(SOCS2) complex, composed of SOCS2, CUL5, ELOB, ELOC and RNF7/RBX2. Interacts with IGF1R. Interacts with DCUN1D1. Post-translationally, ubiquitinated; mediated by AREL1 and leading to its subsequent proteasomal degradation. Ubiquitination is dependent on its phosphorylation at Ser-52, by PKC. Ubiquitination is stimulated by LPS. Phosphorylation at Ser-52 by PKC facilitates its ubiquitination and proteasomal degradation. As to expression, high expression in heart, placenta, lung, kidney and prostate. Predominantly expressed in pulmonary epithelia cells, specifically type II pneumocytes.

Its subcellular location is the cytoplasm. It participates in protein modification; protein ubiquitination. Its activity is regulated as follows. Substrate-binding is prevented by the covalent inhibitor MN551 that cross-links with Cys-111. Also inhibited by a MN551 derivative, MN714, which contains a pivaloyloxymethyl that allows cell permeability. Substrate-recognition component of a cullin-5-RING E3 ubiquitin-protein ligase complex (ECS complex, also named CRL5 complex), which mediates the ubiquitination and subsequent proteasomal degradation of target proteins, such as EPOR and GHR. Specifically recognizes and binds phosphorylated proteins via its SH2 domain, promoting their ubiquitination. The ECS(SOCS2) complex acts as a key regulator of growth hormone receptor (GHR) levels by mediating ubiquitination and degradation of GHR, following GHR phosphorylation by JAK2. The ECS(SOCS2) also catalyzes ubiquitination and degradation of JAK2-phosphorylated EPOR. The protein is Suppressor of cytokine signaling 2 of Homo sapiens (Human).